The chain runs to 384 residues: WAT1-related protein At4g08290 (384 aa).

10 consecutive transmembrane segments (helical) span residues 15–35 (LLMI…MATL), 43–63 (VVIV…ALIF), 73–93 (LSVL…DQGF), 104–124 (TYTS…AWIL), 140–160 (IIGT…KGPL), 186–206 (WVVG…FYVL), 219–239 (SLSA…ALVV), 255–275 (FAPL…QGMV), 282–302 (VFVT…ASFI), and 307–327 (IHFG…MVVW). 2 EamA domains span residues 25 to 154 (AGTY…LVMT) and 198 to 326 (VAWS…YMVV).

The protein belongs to the drug/metabolite transporter (DMT) superfamily. Plant drug/metabolite exporter (P-DME) (TC 2.A.7.4) family.

It localises to the membrane. This chain is WAT1-related protein At4g08290, found in Arabidopsis thaliana (Mouse-ear cress).